The primary structure comprises 366 residues: ACP-SH:acetate ligase (366 aa).

It is found in the cytoplasm. The enzyme catalyses holo-[ACP] + acetate + ATP = acetyl-[ACP] + AMP + diphosphate. Acyl-carrier protein (ACP) acetate ligase of the biotin-dependent malonate decarboxylase multienzyme complex (EC 7.2.4.4). Involved in the conversion of the thiol group of the ACP-bound 2'-(5-phosphoribosyl)-3'-dephospho-CoA prosthetic group into its acetyl thioester using the energy from the hydrolysis of ATP. This is ACP-SH:acetate ligase (madH) from Malonomonas rubra.